The following is a 397-amino-acid chain: DNA-directed RNA polymerase subunit Rpo1C (397 aa).

Belongs to the RNA polymerase beta' chain family. As to quaternary structure, part of the RNA polymerase complex. An artificial construct of the RNAP clamp domain (including part of this protein) contacts transcription elongation factors Spt4 and Spt5.

Its subcellular location is the cytoplasm. It catalyses the reaction RNA(n) + a ribonucleoside 5'-triphosphate = RNA(n+1) + diphosphate. Functionally, DNA-dependent RNA polymerase (RNAP) catalyzes the transcription of DNA into RNA using the four ribonucleoside triphosphates as substrates. Forms part of the jaw domain. The polypeptide is DNA-directed RNA polymerase subunit Rpo1C (Pyrococcus furiosus (strain ATCC 43587 / DSM 3638 / JCM 8422 / Vc1)).